A 94-amino-acid polypeptide reads, in one-letter code: MKQKLMVGAFIAAVSLSAAAVDMSNVVKTYDLQDGSKVHVFKDGKMGMENKFGKSMNMPEGKVMETRDGTKIIMKGNEIFRLDEALRKGHSEGG.

Residues M1 to A20 form the signal peptide.

Monomer in the copper-bound form. Homodimer as apoprotein. Dissociates into monomers upon copper binding.

The protein resides in the periplasm. Functionally, involved in resistance to copper. Can bind up to 2 copper ions. Has higher affinity for Cu(+) than for Cu(2+). The protein is Copper resistance protein K (copK) of Cupriavidus metallidurans (strain ATCC 43123 / DSM 2839 / NBRC 102507 / CH34) (Ralstonia metallidurans).